The chain runs to 358 residues: tRNA (guanine-N(7)-)-methyltransferase (358 aa).

The interval methionine 1 to aspartate 29 is disordered. S-adenosyl-L-methionine-binding positions include glycine 99 and glutamate 122–isoleucine 123. Residues threonine 151–threonine 186 are compositionally biased toward low complexity. Residues threonine 151–threonine 194 are disordered. S-adenosyl-L-methionine is bound by residues asparagine 209–threonine 210 and cysteine 229. The active site involves aspartate 232. Threonine 330–glutamate 332 is an S-adenosyl-L-methionine binding site.

The protein belongs to the class I-like SAM-binding methyltransferase superfamily. TrmB family. Forms a complex with trm82.

Its subcellular location is the nucleus. The enzyme catalyses guanosine(46) in tRNA + S-adenosyl-L-methionine = N(7)-methylguanosine(46) in tRNA + S-adenosyl-L-homocysteine. It functions in the pathway tRNA modification; N(7)-methylguanine-tRNA biosynthesis. Functionally, catalyzes the formation of N(7)-methylguanine at position 46 (m7G46) in tRNA. The protein is tRNA (guanine-N(7)-)-methyltransferase (trm8) of Aspergillus fumigatus (strain CBS 144.89 / FGSC A1163 / CEA10) (Neosartorya fumigata).